We begin with the raw amino-acid sequence, 179 residues long: Large ribosomal subunit protein uL5 (179 aa).

Belongs to the universal ribosomal protein uL5 family. In terms of assembly, part of the 50S ribosomal subunit; part of the 5S rRNA/L5/L18/L25 subcomplex. Contacts the 5S rRNA and the P site tRNA. Forms a bridge to the 30S subunit in the 70S ribosome.

This is one of the proteins that bind and probably mediate the attachment of the 5S RNA into the large ribosomal subunit, where it forms part of the central protuberance. In the 70S ribosome it contacts protein S13 of the 30S subunit (bridge B1b), connecting the 2 subunits; this bridge is implicated in subunit movement. Contacts the P site tRNA; the 5S rRNA and some of its associated proteins might help stabilize positioning of ribosome-bound tRNAs. In Desulfovibrio desulfuricans (strain ATCC 27774 / DSM 6949 / MB), this protein is Large ribosomal subunit protein uL5.